The following is a 418-amino-acid chain: Delta(14)-sterol reductase TM7SF2 (418 aa).

6 helical membrane passes run 13–35 (FGGP…HLLL), 62–81 (ALLL…LLPA), 102–124 (GFQA…LPLG), 129–148 (MLLP…SLFL), 255–277 (FGFM…QAQF), and 287–304 (LPMA…YYIF). NADP(+)-binding positions include Lys311, Arg315, Leu338, Trp343, and 350–351 (NY). Residues 355-377 (LIMALAWSLPCGVSHLLPYFYLL) traverse the membrane as a helical segment. Residues Asp390, 394 to 398 (CLQKY), and Tyr405 each bind NADP(+).

Belongs to the ERG4/ERG24 family. Expressed in adult heart, brain, pancreas, lung, liver, skeletal muscle, kidney, ovary, prostate, testis and adrenal gland, but not detected in placenta, spleen, thymus, small intestine, colon (mucosal lining), or peripheral blood leukocytes.

It localises to the microsome membrane. The protein resides in the endoplasmic reticulum membrane. It catalyses the reaction 4,4-dimethyl-5alpha-cholesta-8,24-dien-3beta-ol + NADP(+) = 4,4-dimethyl-5alpha-cholesta-8,14,24-trien-3beta-ol + NADPH + H(+). The catalysed reaction is 5alpha-cholest-8,14-dien-3beta-ol + NADPH + H(+) = 5alpha-cholest-8-en-3beta-ol + NADP(+). It carries out the reaction 4,4-dimethyl-8,14-cholestadien-3beta-ol + NADPH + H(+) = 4,4-dimethyl-5alpha-cholest-8-en-3beta-ol + NADP(+). The protein operates within steroid biosynthesis; cholesterol biosynthesis. In terms of biological role, catalyzes the reduction of the C14-unsaturated bond of lanosterol, as part of the metabolic pathway leading to cholesterol biosynthesis. This is Delta(14)-sterol reductase TM7SF2 (TM7SF2) from Homo sapiens (Human).